The sequence spans 216 residues: GTP-binding nuclear protein Ran, testis-specific isoform (216 aa).

A2 carries the post-translational modification N-acetylalanine. The Small GTPase Ran-type domain occupies 7 to 171 (PQVQFKVVLV…FWLARKLIGD (165 aa)). 17–24 (GDGGTGKT) provides a ligand contact to GTP. The residue at position 24 (T24) is a Phosphothreonine. The interval 37–45 (KEYVATLGV) is switch-I. The residue at position 60 (K60) is an N6-acetyllysine. 65 to 69 (DTAGQ) lines the GTP pocket. The interval 68–84 (GQEKFGGLRDGYYIQAQ) is switch-II. K71 is subject to N6-acetyllysine; alternate. Residue K71 forms a Glycyl lysine isopeptide (Lys-Gly) (interchain with G-Cter in SUMO2); alternate linkage. A Glycyl lysine isopeptide (Lys-Gly) (interchain with G-Cter in ubiquitin); alternate cross-link involves residue K71. Residue K99 is modified to N6-acetyllysine. A GTP-binding site is contributed by 122-125 (NKVD). N6-acetyllysine is present on K134. Position 159 is an N6-acetyllysine; alternate (K159). Position 159 is an N6-succinyllysine; alternate (K159).

This sequence belongs to the small GTPase superfamily. Ran family. In terms of tissue distribution, testis specific.

Its subcellular location is the nucleus. It carries out the reaction GTP + H2O = GDP + phosphate + H(+). In terms of biological role, GTP-binding protein involved in nucleocytoplasmic transport. Required for the import of protein into the nucleus and also for RNA export. Involved in chromatin condensation and control of cell cycle. This is GTP-binding nuclear protein Ran, testis-specific isoform (Rasl2-9) from Mus musculus (Mouse).